Reading from the N-terminus, the 225-residue chain is 2-C-methyl-D-erythritol 4-phosphate cytidylyltransferase (225 aa).

The protein belongs to the IspD/TarI cytidylyltransferase family. IspD subfamily.

It carries out the reaction 2-C-methyl-D-erythritol 4-phosphate + CTP + H(+) = 4-CDP-2-C-methyl-D-erythritol + diphosphate. It participates in isoprenoid biosynthesis; isopentenyl diphosphate biosynthesis via DXP pathway; isopentenyl diphosphate from 1-deoxy-D-xylulose 5-phosphate: step 2/6. Functionally, catalyzes the formation of 4-diphosphocytidyl-2-C-methyl-D-erythritol from CTP and 2-C-methyl-D-erythritol 4-phosphate (MEP). This chain is 2-C-methyl-D-erythritol 4-phosphate cytidylyltransferase, found in Cereibacter sphaeroides (strain KD131 / KCTC 12085) (Rhodobacter sphaeroides).